The following is a 154-amino-acid chain: Large ribosomal subunit protein uL23y (154 aa).

The protein belongs to the universal ribosomal protein uL23 family.

Binds to a specific region on the 26S rRNA. In Arabidopsis thaliana (Mouse-ear cress), this protein is Large ribosomal subunit protein uL23y (RPL23AB).